A 396-amino-acid chain; its full sequence is Inhibitory POU protein (396 aa).

A POU-IV box motif is present at residues 86 to 95 (RAEALAAVDI). One can recognise a POU-specific domain in the interval 222–299 (DTDTDPRELE…ILQAWLEEAE (78 aa)). A disordered region spans residues 302 to 328 (AKNKRRDPDAPSVLPAGEKKRKRTSIA). The homeobox; atypical DNA-binding region spans 320 to 377 (KKRKRTSIAAPEKRSLEAYFAVQPRPSGEKIAAIAEKLDLKKNVVRVWFCNQRQKQKR).

The protein belongs to the POU transcription factor family. Class-4 subfamily. In terms of tissue distribution, coexpressed with vvl in overlapping subsets of neurons in the embryonic central nervous system. Expressed in olfactory neurons.

The protein localises to the nucleus. In terms of biological role, modulates gene transcription; simultaneously generates both a specific activator and an inhibitor of gene transcription, capable of modulating two distinct regulatory programs during neural development. Has a role in olfactory behavior. The polypeptide is Inhibitory POU protein (acj6) (Drosophila melanogaster (Fruit fly)).